The chain runs to 793 residues: Putative potassium transporter 12 (793 aa).

Residues 1–54 (MASISDSETTNHGSIWDLDQNLDQPMDEEASRLKNMYTEKKFSSILLLRLAFQS) are Cytoplasmic-facing. Residues 55–75 (LGVVFGDLGTSPLYVFYNIFP) form a helical membrane-spanning segment. The Extracellular portion of the chain corresponds to 76 to 87 (HGVDDDEDVIGA). The helical transmembrane segment at 88 to 108 (LSLIIYTLTLIPLMKYVFVVL) threads the bilayer. The Cytoplasmic portion of the chain corresponds to 109–175 (RANDNGQGGT…EGHVYKKNCL (67 aa)). Residues 176–196 (LILVLIGTCTAIGDGILTPAI) form a helical membrane-spanning segment. Residues 197–215 (SVLSASGGIRVQNQKMSTD) are Extracellular-facing. A helical transmembrane segment spans residues 216-236 (VVVVVAVIILIGLFSMQHYGT). Topologically, residues 237–238 (DK) are cytoplasmic. A helical transmembrane segment spans residues 239–259 (VGWLFAPIVLLWFILIGTIGA). Topologically, residues 260 to 289 (LNIHKYNSSVLKAYNPVYIYRYFRRGKSES) are extracellular. N-linked (GlcNAc...) asparagine glycosylation is present at asparagine 266. The chain crosses the membrane as a helical span at residues 290–310 (WTSLGGIMLSITGTEALYADL). Over 311–315 (CHFPV) the chain is Cytoplasmic. A helical membrane pass occupies residues 316–338 (LAIQIAFTLVVFPCLLLAYTGQA). Residues 339–359 (AYIISNKDHVVDAFYRSIPDT) lie on the Extracellular side of the membrane. Residues 360–380 (IYWPVFIIATLAAIVASQATI) traverse the membrane as a helical segment. Over 381–411 (SATYSIIKQALALGCFPRVSVVHTSKKFLGQ) the chain is Cytoplasmic. A helical membrane pass occupies residues 412 to 432 (IYIPDINWVLMILCIAVTAGF). Residues 433-444 (KNQSQIGNAYGT) lie on the Extracellular side of the membrane. A glycan (N-linked (GlcNAc...) asparagine) is linked at asparagine 434. Residues 445 to 465 (AVVIVMLVTTFLMVPIMLLVW) traverse the membrane as a helical segment. Residues 466–468 (KSH) are Cytoplasmic-facing. The helical transmembrane segment at 469–489 (WILVVIFIVLSLMVELPYFTA) threads the bilayer. Residues 490–496 (CINKVDQ) are Extracellular-facing. The helical transmembrane segment at 497–517 (GGWVPLVVATTCFIIMYVWHF) threads the bilayer. Topologically, residues 518-793 (CTVKRYEFEM…LLNVGQIYYI (276 aa)) are cytoplasmic.

This sequence belongs to the HAK/KUP transporter (TC 2.A.72.3) family.

The protein resides in the membrane. Its function is as follows. High-affinity potassium transporter. The protein is Putative potassium transporter 12 (HAK12) of Oryza sativa subsp. japonica (Rice).